The following is a 182-amino-acid chain: UPF0148 protein VNG_2366C (182 aa).

The segment at 1 to 162 is disordered; it reads MSNTDDGFDK…RASDADDPRT (162 aa). 2 stretches are compositionally biased toward basic and acidic residues: residues 7-33 and 47-62; these read GFDKEAAREELREKYNADQQDREETAR and DHCDRCGTPLFRHDGE. Residues 105-122 show a composition bias toward low complexity; it reads PDTSSSTAAATDDVPTAA. Residues 153-162 show a composition bias toward basic and acidic residues; it reads RASDADDPRT.

This sequence belongs to the UPF0148 family.

In Halobacterium salinarum (strain ATCC 700922 / JCM 11081 / NRC-1) (Halobacterium halobium), this protein is UPF0148 protein VNG_2366C.